Consider the following 780-residue polypeptide: Replication origin-binding protein (780 aa).

A Helicase ATP-binding domain is found at 39 to 195 (SFENVRQPIK…AAFKPDTQIA (157 aa)). 52–59 (AAMGSGKT) lines the ATP pocket.

Belongs to the herpesviridae OriBP family.

Probably involved in DNA replication. Binds the origin of replication (ori). The chain is Replication origin-binding protein (U73) from Human herpesvirus 6A (strain Uganda-1102) (HHV-6 variant A).